Here is a 202-residue protein sequence, read N- to C-terminus: uncharacterized protein (202 aa).

The START domain maps to 1–202 (MRGILRMTVL…KGLRSAAEKR (202 aa)).

Functionally, may play a role in the interaction of the bacterium with animal cells. This is an uncharacterized protein from Pseudomonas aeruginosa (strain ATCC 15692 / DSM 22644 / CIP 104116 / JCM 14847 / LMG 12228 / 1C / PRS 101 / PAO1).